A 248-amino-acid polypeptide reads, in one-letter code: Aliphatic sulfonates import ATP-binding protein SsuB 2 (248 aa).

One can recognise an ABC transporter domain in the interval 14–230; sequence VRVESLVRSF…DHGHRRFGEI (217 aa). 46–53 lines the ATP pocket; it reads GRSGSGKS.

This sequence belongs to the ABC transporter superfamily. Aliphatic sulfonates importer (TC 3.A.1.17.2) family. As to quaternary structure, the complex is composed of two ATP-binding proteins (SsuB), two transmembrane proteins (SsuC) and a solute-binding protein (SsuA).

It localises to the cell inner membrane. It carries out the reaction ATP + H2O + aliphatic sulfonate-[sulfonate-binding protein]Side 1 = ADP + phosphate + aliphatic sulfonateSide 2 + [sulfonate-binding protein]Side 1.. Functionally, part of the ABC transporter complex SsuABC involved in aliphatic sulfonates import. Responsible for energy coupling to the transport system. In Mesorhizobium japonicum (strain LMG 29417 / CECT 9101 / MAFF 303099) (Mesorhizobium loti (strain MAFF 303099)), this protein is Aliphatic sulfonates import ATP-binding protein SsuB 2.